Consider the following 504-residue polypeptide: Plasma protease C1 inhibitor (504 aa).

The signal sequence occupies residues 1 to 22; the sequence is MASKLTPLTLLLLLLAGDRAFS. The interval 23–75 is disordered; the sequence is DSEVTSHSSQDPLVVQEGSRDSVPERDGSRSPIEHTGQSSTWPTTSGSTKISN. A compositionally biased stretch (polar residues) spans 24–33; the sequence is SEVTSHSSQD. Basic and acidic residues predominate over residues 40–55; the sequence is GSRDSVPERDGSRSPI. A compositionally biased stretch (polar residues) spans 58–75; that stretch reads TGQSSTWPTTSGSTKISN. Residues Asn-75, Asn-83, Asn-107, Asn-243, and Asn-356 are each glycosylated (N-linked (GlcNAc...) asparagine). A disordered region spans residues 94 to 132; sequence AQLPEDSPSQSPVNSSSPPSTASAPPTQAPTEPLCPEPL. Residues 100-125 show a composition bias toward low complexity; that stretch reads SPSQSPVNSSSPPSTASAPPTQAPTE.

It belongs to the serpin family. Interacts with MASP1.

The protein resides in the secreted. Serine protease inhibitor, which acrs as a regulator of the classical complement pathway. Forms a proteolytically inactive stoichiometric complex with the C1r or C1s proteases. May also regulate blood coagulation, fibrinolysis and the generation of kinins. Very efficient inhibitor of FXIIa. Inhibits chymotrypsin and kallikrein. This Rattus norvegicus (Rat) protein is Plasma protease C1 inhibitor (Serping1).